The following is a 449-amino-acid chain: Keratin, type I cytoskeletal 27 (449 aa).

The tract at residues 1 to 73 (MSVRFSSASR…VNEHGLLSGN (73 aa)) is head. The segment at 74–109 (EKVTMQNLNDRLASYLENVQALEEANADLEQKIKDW) is coil 1A. The IF rod domain maps to 74 to 389 (EKVTMQNLND…LLIGGDEGSC (316 aa)). The linker 1 stretch occupies residues 110–131 (YEKFGPGSCRGLDHDYSRYFPI). The interval 132-223 (IDDLRTQIIS…KNHEEEMQAL (92 aa)) is coil 1B. Residues 224–246 (QCAAGGNVNVEMNAAPGVDLTVL) form a linker 12 region. The coil 2 stretch occupies residues 247–385 (LNNMRAEYEA…ETYCLLIGGD (139 aa)). Positions 386 to 449 (EGSCVKSKGQ…NNKNEQRIPS (64 aa)) are tail. The tract at residues 425-449 (LSSRVHTLEEKSTKVNNKNEQRIPS) is disordered. Residues 430–449 (HTLEEKSTKVNNKNEQRIPS) are compositionally biased toward basic and acidic residues.

Belongs to the intermediate filament family. Heterotetramer of two type I and two type II keratins. Interacts with KRT6A to form filaments.

The protein resides in the cytoplasm. Functionally, essential for the proper assembly of type I and type II keratin protein complexes and formation of keratin intermediate filaments in the inner root sheath (irs). This is Keratin, type I cytoskeletal 27 from Rattus norvegicus (Rat).